The following is a 249-amino-acid chain: Small ribosomal subunit protein eS6 (249 aa).

Positions 223–238 (LRQRDHSKKHTRKVHA) are enriched in basic residues. Residues 223–249 (LRQRDHSKKHTRKVHAQRAEVAAFQKK) are disordered.

Belongs to the eukaryotic ribosomal protein eS6 family. Ribosomal protein S6 is the major substrate of protein kinases in eukaryote ribosomes.

In terms of biological role, component of the 40S small ribosomal subunit. Plays an important role in controlling cell growth and proliferation through the selective translation of particular classes of mRNA. The polypeptide is Small ribosomal subunit protein eS6 (RPS6) (Leishmania major).